The sequence spans 54 residues: U1-ctenitoxin-Pr1a (54 aa).

Cystine bridges form between cysteine 2-cysteine 19, cysteine 9-cysteine 25, cysteine 16-cysteine 51, cysteine 18-cysteine 39, and cysteine 27-cysteine 37.

As to expression, expressed by the venom gland.

The protein resides in the secreted. Functionally, omega-agatoxins are antagonists of voltage-gated calcium channels (Cav). Causes rapid general flaccid paralysis followed by death in 10-30 minutes when injected in mice at dose levels of 5 ug per mouse. In Phoneutria reidyi (Brazilian Amazonian armed spider), this protein is U1-ctenitoxin-Pr1a.